The primary structure comprises 281 residues: Pantothenate synthetase (281 aa).

30 to 37 (MGNLHQGH) lines the ATP pocket. The active-site Proton donor is histidine 37. Glutamine 61 is a (R)-pantoate binding site. A beta-alanine-binding site is contributed by glutamine 61. Residue 149 to 152 (GRKD) participates in ATP binding. Glutamine 155 contacts (R)-pantoate. ATP-binding positions include isoleucine 178 and 186–189 (MSSR).

The protein belongs to the pantothenate synthetase family. In terms of assembly, homodimer.

The protein resides in the cytoplasm. The catalysed reaction is (R)-pantoate + beta-alanine + ATP = (R)-pantothenate + AMP + diphosphate + H(+). The protein operates within cofactor biosynthesis; (R)-pantothenate biosynthesis; (R)-pantothenate from (R)-pantoate and beta-alanine: step 1/1. Functionally, catalyzes the condensation of pantoate with beta-alanine in an ATP-dependent reaction via a pantoyl-adenylate intermediate. The sequence is that of Pantothenate synthetase from Shewanella denitrificans (strain OS217 / ATCC BAA-1090 / DSM 15013).